Here is a 219-residue protein sequence, read N- to C-terminus: MIKKLSIVILFSCISFVLSTNFCNKELCKRQNGPQSFTYLKHIGCRHTGKNANTCPRDAKILPMSTKRKNLILKVHNRLRNKVALGKLPGFPKAARMPILRWDDELAYLAELNVKQCKMEHDQCRNTDKFKYAGQNLAYTMGTPQKNAVRIKKLIRAWFKEHENATASFIDKYRDHPQGRVIGHFTAMIQDRTDTVGCAILRHSGNKYFFWPVIMVLQI.

An N-terminal signal peptide occupies residues 1–19 (MIKKLSIVILFSCISFVLS). 3 disulfide bridges follow: C23–C45, C28–C124, and C55–C117. In terms of domain architecture, SCP spans 73-211 (LKVHNRLRNK…RHSGNKYFFW (139 aa)).

Belongs to the CRISP family. As to expression, expressed in salivary glands.

Its subcellular location is the secreted. This is Antigen 5 like allergen Cul n 1 from Culicoides nubeculosus (Biting midge).